The primary structure comprises 122 residues: uncharacterized protein (122 aa).

This is an uncharacterized protein from Caenorhabditis elegans.